The primary structure comprises 1115 residues: Serine/threonine-protein kinase/endoribonuclease IRE1 (1115 aa).

Positions 1 to 18 (MRLLRRNMLVLTLLVCVF) are cleaved as a signal peptide. Residues 19-526 (SSIISCSIPL…RELDEKNQNS (508 aa)) lie on the Lumenal side of the membrane. 4 N-linked (GlcNAc...) asparagine glycosylation sites follow: asparagine 111, asparagine 213, asparagine 298, and asparagine 397. A helical membrane pass occupies residues 527–555 (LLLKFGSLVYRIIETGVFLLLFLIFCAIL). Over 556–1115 (QRFKILPPLY…DQILREFLYS (560 aa)) the chain is Cytoplasmic. The disordered stretch occupies residues 617 to 658 (GSLKSEKDNDDADEDDEKSLDLTTEKKKRKRGSRGGKKGRKS). A compositionally biased stretch (acidic residues) spans 624–634 (DNDDADEDDEK). Residues 642 to 658 (KKKRKRGSRGGKKGRKS) are compositionally biased toward basic residues. The Protein kinase domain occupies 674 to 980 (VVSEKILGYG…AMKVLRHPLF (307 aa)). The ADP site is built by serine 684, lysine 702, glutamate 746, cysteine 748, and asparagine 751. Residue aspartate 797 is the Proton acceptor of the active site. 2 residues coordinate Mg(2+): asparagine 802 and aspartate 828. Serine 840 and serine 841 each carry phosphoserine; by autocatalysis. Threonine 844 is subject to Phosphothreonine; by autocatalysis. The 133-residue stretch at 983 to 1115 (KSKKLEFLLK…DQILREFLYS (133 aa)) folds into the KEN domain.

It belongs to the protein kinase superfamily. Ser/Thr protein kinase family. As to quaternary structure, homodimer; in response to the accumulation of unfolded proteins. Dimerization of lumenal domains help position the cytoplasmic kinase domains optimally for autophosphorylation to initiate the unfolded protein response. Dimerization of the kinase domain is important for ribonuclease activity. Interacts (when phosphorylated) with PTC2; the interaction is direct and serves to attenuate the endoplasmic reticulum unfolded protein response. The cofactor is Mg(2+). Autophosphorylated mainly on serine residues; phosphorylation enables nucleotide binding by the active site.

Its subcellular location is the endoplasmic reticulum membrane. The enzyme catalyses L-seryl-[protein] + ATP = O-phospho-L-seryl-[protein] + ADP + H(+). The catalysed reaction is L-threonyl-[protein] + ATP = O-phospho-L-threonyl-[protein] + ADP + H(+). Its activity is regulated as follows. The kinase domain is activated by trans-autophosphorylation. Kinase activity is required for activation of the endoribonuclease domain. Inactivated by dephosphorylation via recruitment of PTC2. Functionally, senses unfolded proteins in the lumen of the endoplasmic reticulum via its N-terminal domain which leads to enzyme auto-activation. The active endoribonuclease domain splices HAC1 precursor mRNA to produce the mature form which then induces transcription of UPR target genes. The chain is Serine/threonine-protein kinase/endoribonuclease IRE1 (IRE1) from Saccharomyces cerevisiae (strain ATCC 204508 / S288c) (Baker's yeast).